Here is a 338-residue protein sequence, read N- to C-terminus: Protein FosB (338 aa).

Disordered stretches follow at residues methionine 1–phenylalanine 54 and alanine 80–leucine 179. Over residues serine 13–serine 31 the composition is skewed to polar residues. Serine 27 carries the post-translational modification Phosphoserine. The span at proline 123–proline 137 shows a compositional bias: low complexity. Positions glutamate 155–histidine 218 constitute a bZIP domain. A basic motif region spans residues lysine 157 to arginine 182. The segment at leucine 183–leucine 211 is leucine-zipper. Disordered stretches follow at residues cysteine 222–leucine 276 and alanine 315–leucine 338. Over residues leucine 256–proline 265 the composition is skewed to pro residues. A compositionally biased stretch (polar residues) spans phenylalanine 266–leucine 276.

Belongs to the bZIP family. Fos subfamily. In terms of assembly, heterodimer; binds to DNA as heterodimer. Component of an AP-1 transcription factor complex; composed of FOS-JUN heterodimers. As part of the AP-1 transcription factor complex, forms heterodimers with JUN, JUNB or JUND, thereby binding to the AP-1 consensus sequence and stimulating transcription. Post-translationally, phosphorylated; phosphorylation is induced by chronic electroconvulsive seizure (ECS) treatment. As to expression, expressed in brain. Expressed in pyramidal cells in CA1 and CA3, in the dentate gyrus and the nucleus accumbens (at protein level).

It localises to the nucleus. Heterodimerizes with proteins of the JUN family to form an AP-1 transcription factor complex, thereby enhancing their DNA binding activity to an AP-1 consensus sequence 5'-TGA[GC]TCA-3' and enhancing their transcriptional activity. Exhibits transactivation activity in vitro. As part of the AP-1 complex, facilitates enhancer selection together with cell-type-specific transcription factors by collaboratively binding to nucleosomal enhancers and recruiting the SWI/SNF (BAF) chromatin remodeling complex to establish accessible chromatin. Together with JUN, plays a role in activation-induced cell death of T cells by binding to the AP-1 promoter site of FASLG/CD95L, and inducing its transcription in response to activation of the TCR/CD3 signaling pathway. Involved in the display of nurturing behavior towards newborns. May play a role in neurogenesis in the hippocampus and in learning and memory-related tasks by regulating the expression of various genes involved in neurogenesis, depression and epilepsy. Implicated in behavioral responses related to morphine reward and spatial memory. The sequence is that of Protein FosB from Rattus norvegicus (Rat).